The chain runs to 330 residues: 6-phosphogluconolactonase (330 aa).

This sequence belongs to the cycloisomerase 2 family.

The catalysed reaction is 6-phospho-D-glucono-1,5-lactone + H2O = 6-phospho-D-gluconate + H(+). It participates in carbohydrate degradation; pentose phosphate pathway; D-ribulose 5-phosphate from D-glucose 6-phosphate (oxidative stage): step 2/3. Its function is as follows. Catalyzes the hydrolysis of 6-phosphogluconolactone to 6-phosphogluconate. In Erwinia tasmaniensis (strain DSM 17950 / CFBP 7177 / CIP 109463 / NCPPB 4357 / Et1/99), this protein is 6-phosphogluconolactonase.